The sequence spans 783 residues: Tricorn protease-interacting factor F2 (783 aa).

Residues E107 and 236–240 contribute to the substrate site; that span reads GAMEN. Residue H271 participates in Zn(2+) binding. The Proton acceptor role is filled by E272. Positions 275 and 294 each coordinate Zn(2+).

This sequence belongs to the peptidase M1 family. In terms of assembly, monomer. Part of the Tricorn proteolytic complex. Requires Zn(2+) as cofactor.

The protein resides in the cytoplasm. Functionally, proteases F1, F2 and F3 degrade oligopeptides produced by Tricorn (themselves probably produced by the proteasome), yielding free amino acids. The polypeptide is Tricorn protease-interacting factor F2 (trf2) (Thermoplasma volcanium (strain ATCC 51530 / DSM 4299 / JCM 9571 / NBRC 15438 / GSS1)).